We begin with the raw amino-acid sequence, 101 residues long: MIREERLLKVLKAPHISEKSTMVAEKLNTIVFKVATDATKAEIKAAVEKLFEVKVEAVRTLNVVGKTKRTGSRMGRRSDWKKAYVTLVEGQDIDFVGGAAE.

It belongs to the universal ribosomal protein uL23 family. As to quaternary structure, part of the 50S ribosomal subunit. Contacts protein L29, and trigger factor when it is bound to the ribosome.

One of the early assembly proteins it binds 23S rRNA. One of the proteins that surrounds the polypeptide exit tunnel on the outside of the ribosome. Forms the main docking site for trigger factor binding to the ribosome. This chain is Large ribosomal subunit protein uL23, found in Tolumonas auensis (strain DSM 9187 / NBRC 110442 / TA 4).